The chain runs to 1620 residues: Myb-like protein X (1620 aa).

Residues Met1–Asn13 show a composition bias toward polar residues. 4 disordered regions span residues Met1–Thr57, Thr176–Gly204, Phe294–Glu318, and Lys450–Ala849. Over residues Pro28–Thr57 the composition is skewed to low complexity. The span at Gly177–Gly187 shows a compositional bias: gly residues. An SWIRM domain is found at Gly310 to Asn421. Positions Lys450 to Lys497 are enriched in basic and acidic residues. Positions Glu498–Glu511 are enriched in acidic residues. Basic and acidic residues predominate over residues Lys512–Thr568. Over residues Asp570–Ser598 the composition is skewed to low complexity. The segment covering Lys606–Lys628 has biased composition (basic and acidic residues). Low complexity predominate over residues Glu629–Ser645. Over residues Glu647–Asn798 the composition is skewed to basic and acidic residues. Residues Glu799 to Asp834 are compositionally biased toward acidic residues. The 53-residue stretch at Pro925–Glu977 folds into the SANT domain. A disordered region spans residues Gln1049–Thr1506. 3 stretches are compositionally biased toward basic and acidic residues: residues Ser1051 to Asp1195, Glu1219 to Asn1255, and His1264 to Leu1302. The span at Asn1303–Asn1325 shows a compositional bias: low complexity. Residues Thr1338–Asp1350 show a composition bias toward polar residues. Low complexity-rich tracts occupy residues Thr1358 to Thr1382 and Asn1390 to Asn1416. Acidic residues-rich tracts occupy residues Glu1467–Leu1481 and Val1493–Met1504.

The protein localises to the nucleus. This is Myb-like protein X (mybX) from Dictyostelium discoideum (Social amoeba).